A 35-amino-acid chain; its full sequence is N-acylglucosamine 2-epimerase (35 aa).

The tract at residues 1 to 21 (LNLVDQLGEADEELAGTYAEL) is leucine-zipper.

Belongs to the N-acylglucosamine 2-epimerase family. Homodimer. Forms a heterodimer with renin and inhibits its activity.

It catalyses the reaction an N-acyl-D-glucosamine = an N-acyl-D-mannosamine. Its pathway is amino-sugar metabolism; N-acetylneuraminate degradation. Functionally, catalyzes the interconversion of N-acetylglucosamine to N-acetylmannosamine. Involved in the N-glycolylneuraminic acid (Neu5Gc) degradation pathway. The polypeptide is N-acylglucosamine 2-epimerase (Canis lupus familiaris (Dog)).